We begin with the raw amino-acid sequence, 753 residues long: Transcription factor SOX-30 (753 aa).

Disordered regions lie at residues 1–45 and 137–161; these read MERA…TLSA and AKKQ…TGPR. The span at 7–23 shows a compositional bias: pro residues; it reads EPPPQPRPLRPAPPPLP. Positions 337-405 form a DNA-binding region, HMG box; it reads VKRPMNAFMV…KHREEFPGWV (69 aa). Disordered regions lie at residues 514–575 and 726–753; these read TGPS…SPCP and PTST…LRDL. Polar residues-rich tracts occupy residues 531–563 and 726–739; these read TVKQ…STIQ and PTST…VNVT.

In terms of assembly, interacts with CTNNB1, competitively inhibiting CTNNB1-TCF7L2/TCF4 interaction.

It localises to the nucleus. The protein resides in the cytoplasm. Acts both as a transcriptional activator and a repressor. Binds to the DNA sequence 5'-ACAAT-3' and shows a preference for guanine residues surrounding this core motif. Binds to its own promoter and activates its own transcription. Required to activate the expression of postmeiotic genes involved in spermiogenesis. Binds to the promoter region of CTNNB1 and represses its transcription which leads to inhibition of Wnt signaling. Also inhibits Wnt signaling by binding to the CTNNB1 protein, preventing interaction of CTNNB1 with TCF7L2/TCF4. In Homo sapiens (Human), this protein is Transcription factor SOX-30 (SOX30).